Consider the following 113-residue polypeptide: Hydrogenase maturation factor HypA (113 aa).

A Ni(2+)-binding site is contributed by His2. The Zn(2+) site is built by Cys73, Cys76, Cys89, and Cys92.

It belongs to the HypA/HybF family.

Involved in the maturation of [NiFe] hydrogenases. Required for nickel insertion into the metal center of the hydrogenase. The chain is Hydrogenase maturation factor HypA from Legionella pneumophila (strain Paris).